The following is a 226-amino-acid chain: Protein GrpE (226 aa).

2 disordered regions span residues 1-24 and 205-226; these read MADEKNKPENPDLDQRDINNPRDR and GVSKGGPKVSAENGASTSEDNA. Positions 217–226 are enriched in polar residues; it reads NGASTSEDNA.

It belongs to the GrpE family. As to quaternary structure, homodimer.

The protein localises to the cytoplasm. Its function is as follows. Participates actively in the response to hyperosmotic and heat shock by preventing the aggregation of stress-denatured proteins, in association with DnaK and GrpE. It is the nucleotide exchange factor for DnaK and may function as a thermosensor. Unfolded proteins bind initially to DnaJ; upon interaction with the DnaJ-bound protein, DnaK hydrolyzes its bound ATP, resulting in the formation of a stable complex. GrpE releases ADP from DnaK; ATP binding to DnaK triggers the release of the substrate protein, thus completing the reaction cycle. Several rounds of ATP-dependent interactions between DnaJ, DnaK and GrpE are required for fully efficient folding. This is Protein GrpE from Brucella melitensis biotype 1 (strain ATCC 23456 / CCUG 17765 / NCTC 10094 / 16M).